The primary structure comprises 66 residues: ATP synthase F(0) complex subunit 8 (66 aa).

A helical membrane pass occupies residues 8–24; that stretch reads IWLLAVVIVLTTLMIFL. The residue at position 54 (Lys-54) is an N6-acetyllysine; alternate. An N6-succinyllysine; alternate modification is found at Lys-54. The residue at position 57 (Lys-57) is an N6-acetyllysine.

It belongs to the ATPase protein 8 family. Component of the ATP synthase complex composed at least of ATP5F1A/subunit alpha, ATP5F1B/subunit beta, ATP5MC1/subunit c (homooctomer), MT-ATP6/subunit a, MT-ATP8/subunit 8, ATP5ME/subunit e, ATP5MF/subunit f, ATP5MG/subunit g, ATP5MK/subunit k, ATP5MJ/subunit j, ATP5F1C/subunit gamma, ATP5F1D/subunit delta, ATP5F1E/subunit epsilon, ATP5PF/subunit F6, ATP5PB/subunit b, ATP5PD/subunit d, ATP5PO/subunit OSCP. ATP synthase complex consists of a soluble F(1) head domain (subunits alpha(3) and beta(3)) - the catalytic core - and a membrane F(0) domain - the membrane proton channel (subunits c, a, 8, e, f, g, k and j). These two domains are linked by a central stalk (subunits gamma, delta, and epsilon) rotating inside the F1 region and a stationary peripheral stalk (subunits F6, b, d, and OSCP). Interacts with PRICKLE3.

The protein localises to the mitochondrion membrane. Functionally, subunit 8, of the mitochondrial membrane ATP synthase complex (F(1)F(0) ATP synthase or Complex V) that produces ATP from ADP in the presence of a proton gradient across the membrane which is generated by electron transport complexes of the respiratory chain. ATP synthase complex consist of a soluble F(1) head domain - the catalytic core - and a membrane F(1) domain - the membrane proton channel. These two domains are linked by a central stalk rotating inside the F(1) region and a stationary peripheral stalk. During catalysis, ATP synthesis in the catalytic domain of F(1) is coupled via a rotary mechanism of the central stalk subunits to proton translocation. In vivo, can only synthesize ATP although its ATP hydrolase activity can be activated artificially in vitro. Part of the complex F(0) domain. This chain is ATP synthase F(0) complex subunit 8, found in Loxodonta africana (African elephant).